The sequence spans 640 residues: 1-deoxy-D-xylulose-5-phosphate synthase (640 aa).

Residues His75 and 117-119 (GHA) contribute to the thiamine diphosphate site. Residue Asp146 coordinates Mg(2+). Thiamine diphosphate-binding positions include 147–148 (AA), Asn175, and Glu370. Residue Asn175 participates in Mg(2+) binding.

The protein belongs to the transketolase family. DXPS subfamily. In terms of assembly, homodimer. The cofactor is Mg(2+). Requires thiamine diphosphate as cofactor.

The catalysed reaction is D-glyceraldehyde 3-phosphate + pyruvate + H(+) = 1-deoxy-D-xylulose 5-phosphate + CO2. The protein operates within metabolic intermediate biosynthesis; 1-deoxy-D-xylulose 5-phosphate biosynthesis; 1-deoxy-D-xylulose 5-phosphate from D-glyceraldehyde 3-phosphate and pyruvate: step 1/1. Its function is as follows. Catalyzes the acyloin condensation reaction between C atoms 2 and 3 of pyruvate and glyceraldehyde 3-phosphate to yield 1-deoxy-D-xylulose-5-phosphate (DXP). This Chlamydia trachomatis serovar D (strain ATCC VR-885 / DSM 19411 / UW-3/Cx) protein is 1-deoxy-D-xylulose-5-phosphate synthase.